The sequence spans 5911 residues: Nonribosomal peptide synthetase 30 (5911 aa).

The disordered stretch occupies residues 1-22 (MVPEKPTAQSKSGIGEPFRAGD). Residues 352-754 (ALIQPSSTAV…GRKDAQVKIR (403 aa)) are adenylation 1. In terms of domain architecture, Carrier 1 spans 891 to 968 (PRPFSVEYSL…EAAAIVARGT (78 aa)). Serine 928 carries the O-(pantetheine 4'-phosphoryl)serine modification. The condensation 1 stretch occupies residues 1007-1422 (EDAFPCTPLQ…ERLIFVIDQL (416 aa)). The segment at 1467 to 1865 (ERALSQPDRP…SLMFVGRKAD (399 aa)) is adenylation 2. The region spanning 2001–2077 (QPTSELEAEM…NICSHSYYCS (77 aa)) is the Carrier 2 domain. Serine 2038 bears the O-(pantetheine 4'-phosphoryl)serine mark. The condensation 2 stretch occupies residues 2121–2538 (QDAYPCTPLQ…GPDINMSDIG (418 aa)). Positions 2568–2977 (EEQARLRPEA…GRKDSQVKIR (410 aa)) are adenylation 3. Positions 3110–3186 (QPSTNAQREL…LIADNSKSIK (77 aa)) constitute a Carrier 3 domain. Serine 3147 is subject to O-(pantetheine 4'-phosphoryl)serine. The segment at 3227–3652 (VQDAYPCTPL…LELVIQAFMA (426 aa)) is condensation 3. Residues 3701–4108 (EERVREQPNA…GRKDSQVKIR (408 aa)) form an adenylation 4 region. Residues 4248–4325 (PPTTPLECQM…DIIATMTKNK (78 aa)) enclose the Carrier 4 domain. Position 4285 is an O-(pantetheine 4'-phosphoryl)serine (serine 4285). The tract at residues 4326-4347 (ATGASRRLPRDDDEPIPHTKYA) is disordered. Residues 4353–4793 (SYAQGRLWFL…SLPLLTEDGR (441 aa)) are condensation 4. Residues 4819-5231 (FKEQVSRHPN…GRMDVQVKIR (413 aa)) are adenylation 5. The Carrier 5 domain maps to 5360-5436 (KPTTDMEVAL…ALARRQEEIV (77 aa)). Residue serine 5397 is modified to O-(pantetheine 4'-phosphoryl)serine. A condensation 5 region spans residues 5474–5828 (VEDMLPLTSM…GIKMKLHFFT (355 aa)).

Belongs to the NRP synthetase family.

Its pathway is secondary metabolite biosynthesis. Functionally, nonribosomal peptide synthetase; part of the gene cluster that mediates the biosynthesis of sansalvamide, a cyclic pentadepsipeptide that shows promising results as potential anti-cancer drug. The nonribosmal peptide synthetase NRPS30 produces sansalvamide by incorporating successively one phenylalanine, one leucine, one alpha-hydroxyisocaproic acid (HICA), one valine and one leucine before sansalvamide is released from by cyclization by the terminal C domain of NRPS30. The HICA residue is probably provided by reduction of alpha-ketoisocaproate by the cluster-specific aldo-keto reductase (NECHADRAFT_45914). The polypeptide is Nonribosomal peptide synthetase 30 (Fusarium vanettenii (strain ATCC MYA-4622 / CBS 123669 / FGSC 9596 / NRRL 45880 / 77-13-4) (Fusarium solani subsp. pisi)).